An 892-amino-acid chain; its full sequence is Alanine--tRNA ligase (892 aa).

Zn(2+)-binding residues include His-596, His-600, Cys-700, and His-704.

Belongs to the class-II aminoacyl-tRNA synthetase family. The cofactor is Zn(2+).

Its subcellular location is the cytoplasm. It catalyses the reaction tRNA(Ala) + L-alanine + ATP = L-alanyl-tRNA(Ala) + AMP + diphosphate. Functionally, catalyzes the attachment of alanine to tRNA(Ala) in a two-step reaction: alanine is first activated by ATP to form Ala-AMP and then transferred to the acceptor end of tRNA(Ala). Also edits incorrectly charged Ser-tRNA(Ala) and Gly-tRNA(Ala) via its editing domain. The chain is Alanine--tRNA ligase from Methanococcus maripaludis (strain C6 / ATCC BAA-1332).